The chain runs to 471 residues: Ribulose bisphosphate carboxylase large chain (471 aa).

Lysine 5 is modified (N6,N6,N6-trimethyllysine). Positions 114 and 164 each coordinate substrate. The active-site Proton acceptor is lysine 166. Lysine 168 contributes to the substrate binding site. Mg(2+) is bound by residues lysine 192, aspartate 194, and glutamate 195. Lysine 192 is modified (N6-carboxylysine). Histidine 285 serves as the catalytic Proton acceptor. 3 residues coordinate substrate: arginine 286, histidine 318, and serine 370.

Belongs to the RuBisCO large chain family. Type I subfamily. In terms of assembly, heterohexadecamer of 8 large chains and 8 small chains; disulfide-linked. The disulfide link is formed within the large subunit homodimers. Mg(2+) is required as a cofactor. The disulfide bond which can form in the large chain dimeric partners within the hexadecamer appears to be associated with oxidative stress and protein turnover.

It localises to the plastid. Its subcellular location is the chloroplast. The enzyme catalyses 2 (2R)-3-phosphoglycerate + 2 H(+) = D-ribulose 1,5-bisphosphate + CO2 + H2O. It catalyses the reaction D-ribulose 1,5-bisphosphate + O2 = 2-phosphoglycolate + (2R)-3-phosphoglycerate + 2 H(+). In terms of biological role, ruBisCO catalyzes two reactions: the carboxylation of D-ribulose 1,5-bisphosphate, the primary event in carbon dioxide fixation, as well as the oxidative fragmentation of the pentose substrate in the photorespiration process. Both reactions occur simultaneously and in competition at the same active site. The chain is Ribulose bisphosphate carboxylase large chain from Deppea grandiflora.